Reading from the N-terminus, the 137-residue chain is Protein phosphatase 1 regulatory subunit 1B (137 aa).

The interval 1–137 is disordered; that stretch reads DPKDRKKIQF…EEEEEEEDSQ (137 aa). Thr33 is subject to Phosphothreonine; by PKA. The segment covering 40–62 has biased composition (basic and acidic residues); that stretch reads LXEHSSPEEEASPHQRAAGEGHH. Phosphoserine is present on residues Ser44 and Ser45. Thr74 bears the Phosphothreonine; by CDK5 mark. Positions 88–99 are enriched in polar residues; the sequence is HLQSISNLGENQ. Ser101 is subject to Phosphoserine. The span at 108 to 117 shows a compositional bias: basic and acidic residues; the sequence is GELRELGYPR. A compositionally biased stretch (acidic residues) spans 118–137; the sequence is EEEEEEEEDDEEEEEEEDSQ. A Phosphoserine modification is found at Ser136.

The protein belongs to the protein phosphatase inhibitor 1 family. In terms of processing, phosphorylation of Thr-33 is required for activity. Dopamine- and cyclic AMP-regulated neuronal phosphoprotein.

Its subcellular location is the cytoplasm. In terms of biological role, inhibitor of protein-phosphatase 1. The protein is Protein phosphatase 1 regulatory subunit 1B (PPP1R1B) of Sus scrofa (Pig).